The following is a 389-amino-acid chain: Probable tRNA pseudouridine synthase D 1 (389 aa).

The Nucleophile role is filled by Asp63. One can recognise a TRUD domain in the interval 135-345 (GAPNYYDDQR…KYTKRPIISI (211 aa)).

Belongs to the pseudouridine synthase TruD family.

The catalysed reaction is uridine(13) in tRNA = pseudouridine(13) in tRNA. Functionally, could be responsible for synthesis of pseudouridine from uracil-13 in transfer RNAs. This chain is Probable tRNA pseudouridine synthase D 1 (truD1), found in Methanococcus maripaludis (strain DSM 14266 / JCM 13030 / NBRC 101832 / S2 / LL).